Here is a 349-residue protein sequence, read N- to C-terminus: Probable dual-specificity RNA methyltransferase RlmN (349 aa).

Catalysis depends on Glu94, which acts as the Proton acceptor. Positions 100 to 334 constitute a Radical SAM core domain; that stretch reads TETRTTACVS…VKVRRSRGKD (235 aa). Cys107 and Cys339 are joined by a disulfide. Positions 114, 118, and 121 each coordinate [4Fe-4S] cluster. S-adenosyl-L-methionine contacts are provided by residues 165–166, Ser197, 220–222, and Asn296; these read GE and SLH. The S-methylcysteine intermediate role is filled by Cys339.

It belongs to the radical SAM superfamily. RlmN family. [4Fe-4S] cluster serves as cofactor.

The protein localises to the cytoplasm. The enzyme catalyses adenosine(2503) in 23S rRNA + 2 reduced [2Fe-2S]-[ferredoxin] + 2 S-adenosyl-L-methionine = 2-methyladenosine(2503) in 23S rRNA + 5'-deoxyadenosine + L-methionine + 2 oxidized [2Fe-2S]-[ferredoxin] + S-adenosyl-L-homocysteine. It carries out the reaction adenosine(37) in tRNA + 2 reduced [2Fe-2S]-[ferredoxin] + 2 S-adenosyl-L-methionine = 2-methyladenosine(37) in tRNA + 5'-deoxyadenosine + L-methionine + 2 oxidized [2Fe-2S]-[ferredoxin] + S-adenosyl-L-homocysteine. In terms of biological role, specifically methylates position 2 of adenine 2503 in 23S rRNA and position 2 of adenine 37 in tRNAs. This Flavobacterium johnsoniae (strain ATCC 17061 / DSM 2064 / JCM 8514 / BCRC 14874 / CCUG 350202 / NBRC 14942 / NCIMB 11054 / UW101) (Cytophaga johnsonae) protein is Probable dual-specificity RNA methyltransferase RlmN.